The chain runs to 462 residues: F-box/LRR-repeat protein At5g38396 (462 aa).

The 47-residue stretch at Met-1–Asp-47 folds into the F-box domain. LRR repeat units lie at residues Ser-118–Arg-146, Cys-148–Tyr-175, Val-197–Ser-222, Cys-302–Ser-333, and Ala-334–Gly-359.

This is F-box/LRR-repeat protein At5g38396 from Arabidopsis thaliana (Mouse-ear cress).